Reading from the N-terminus, the 593-residue chain is Potassium channel KAT6 (593 aa).

At 1–33 (MAASRSELLRPAFGEPSPSLGPFVVNPHTCSYR) the chain is on the cytoplasmic side. The helical transmembrane segment at 34 to 54 (WWQKFLIVLVLYTAWASPFEL) threads the bilayer. The Extracellular segment spans residues 55 to 64 (AMEKSASAAL). The chain crosses the membrane as a helical span at residues 65–85 (AVTELVVDAFFAVDIAVSFFV). The Cytoplasmic portion of the chain corresponds to 86-106 (AYRDASTGLLVTDRKKIATRH). A helical membrane pass occupies residues 107–129 (LARPCLALDVASTIPLQMIYRIV). Residues 130-138 (SGKRQALYG) lie on the Extracellular side of the membrane. A helical; Voltage-sensor transmembrane segment spans residues 139-159 (LLNLLRLWRLRRVSKLFARLE). The Cytoplasmic portion of the chain corresponds to 160–173 (KDIRFSYLWTRLIK). A helical transmembrane segment spans residues 174–194 (LLYVTLFAVHFASCIYLWMAF). Topologically, residues 195–221 (HHKAKELTWIGSQFHGFEDRSVWFCYT) are extracellular. Positions 222–241 (CAVYWSITTLATVGYGDLHA) form an intramembrane region, pore-forming. Residues 242 to 247 (ANTGEM) are Extracellular-facing. A helical membrane pass occupies residues 248 to 268 (LFSIAFMLFNMGLTSYIIGNI). Residues 269-593 (TNLVVHETTN…RDGDHLFFSW (325 aa)) lie on the Cytoplasmic side of the membrane. A nucleoside 3',5'-cyclic phosphate is bound at residue 350–470 (LFQGVSDKLV…VVVFSNFVLY (121 aa)). Residues 522–593 (RVSIHEHLLN…RDGDHLFFSW (72 aa)) form the KHA domain.

Belongs to the potassium channel family. Plant (TC 1.A.1.4) subfamily.

Its subcellular location is the membrane. In terms of biological role, probable inward-rectifying potassium channel. Assuming opened or closed conformations in response to the voltage difference across the membrane, the channel is activated by hyperpolarization. The chain is Potassium channel KAT6 from Oryza sativa subsp. japonica (Rice).